The primary structure comprises 150 residues: Large ribosomal subunit protein bL9 (150 aa).

The protein belongs to the bacterial ribosomal protein bL9 family.

Binds to the 23S rRNA. The polypeptide is Large ribosomal subunit protein bL9 (Burkholderia ambifaria (strain MC40-6)).